A 462-amino-acid polypeptide reads, in one-letter code: Chromosomal replication initiator protein DnaA (462 aa).

The segment at 1–83 is domain I, interacts with DnaA modulators; sequence MSLSLWQQCL…LRFEVGSKPA (83 aa). A domain II region spans residues 83–125; sequence AVRAHSHPVTASVSAPVAPVTRSAPVRPSWDSSPAQPELSYRS. Residues 105–127 form a disordered region; the sequence is SAPVRPSWDSSPAQPELSYRSNV. Residues 112-127 show a composition bias toward polar residues; that stretch reads WDSSPAQPELSYRSNV. The interval 126–342 is domain III, AAA+ region; the sequence is NVNPKHTFDN…GALNRVIANA (217 aa). The ATP site is built by G170, G172, K173, and T174. A domain IV, binds dsDNA region spans residues 343 to 462; sequence NFTGRAITID…FSNLIRTLSS (120 aa).

It belongs to the DnaA family. Oligomerizes as a right-handed, spiral filament on DNA at oriC.

It is found in the cytoplasm. In terms of biological role, plays an essential role in the initiation and regulation of chromosomal replication. ATP-DnaA binds to the origin of replication (oriC) to initiate formation of the DNA replication initiation complex once per cell cycle. Binds the DnaA box (a 9 base pair repeat at the origin) and separates the double-stranded (ds)DNA. Forms a right-handed helical filament on oriC DNA; dsDNA binds to the exterior of the filament while single-stranded (ss)DNA is stabiized in the filament's interior. The ATP-DnaA-oriC complex binds and stabilizes one strand of the AT-rich DNA unwinding element (DUE), permitting loading of DNA polymerase. After initiation quickly degrades to an ADP-DnaA complex that is not apt for DNA replication. Binds acidic phospholipids. The polypeptide is Chromosomal replication initiator protein DnaA (Yersinia enterocolitica serotype O:8 / biotype 1B (strain NCTC 13174 / 8081)).